The chain runs to 491 residues: Ketol-acid reductoisomerase (NADP(+)) (491 aa).

In terms of domain architecture, KARI N-terminal Rossmann spans 14–208; that stretch reads LDQLGRCRFM…GGHRAGVLES (195 aa). NADP(+) contacts are provided by residues 45-48, R68, R76, S78, and 108-110; these read CGAQ and DKQ. H132 is an active-site residue. NADP(+) is bound at residue G158. KARI C-terminal knotted domains are found at residues 209–344 and 345–485; these read SFVA…NAPK and YEGK…MTDM. The Mg(2+) site is built by D217, E221, E389, and E393. Residue S414 participates in substrate binding.

This sequence belongs to the ketol-acid reductoisomerase family. Mg(2+) is required as a cofactor.

The catalysed reaction is (2R)-2,3-dihydroxy-3-methylbutanoate + NADP(+) = (2S)-2-acetolactate + NADPH + H(+). It carries out the reaction (2R,3R)-2,3-dihydroxy-3-methylpentanoate + NADP(+) = (S)-2-ethyl-2-hydroxy-3-oxobutanoate + NADPH + H(+). Its pathway is amino-acid biosynthesis; L-isoleucine biosynthesis; L-isoleucine from 2-oxobutanoate: step 2/4. It functions in the pathway amino-acid biosynthesis; L-valine biosynthesis; L-valine from pyruvate: step 2/4. Involved in the biosynthesis of branched-chain amino acids (BCAA). Catalyzes an alkyl-migration followed by a ketol-acid reduction of (S)-2-acetolactate (S2AL) to yield (R)-2,3-dihydroxy-isovalerate. In the isomerase reaction, S2AL is rearranged via a Mg-dependent methyl migration to produce 3-hydroxy-3-methyl-2-ketobutyrate (HMKB). In the reductase reaction, this 2-ketoacid undergoes a metal-dependent reduction by NADPH to yield (R)-2,3-dihydroxy-isovalerate. The polypeptide is Ketol-acid reductoisomerase (NADP(+)) (Pasteurella multocida (strain Pm70)).